Here is an 80-residue protein sequence, read N- to C-terminus: CLAVATA3/ESR (CLE)-related protein 14 (80 aa).

An N-terminal signal peptide occupies residues 1-26 (MKVWSQRLSFLIVMIFILAGLHSSSA). Hydroxyproline is present on residues P71 and P74. The O-linked (Ara...) hydroxyproline glycan is linked to P74.

The protein belongs to the CLV3/ESR signal peptide family. Interacts with the extracellular leucine-rich repeat region of CLV2 and PEPR2. Post-translationally, the O-glycosylation (arabinosylation) of the hydroxyproline Pro-74 enhances binding affinity of the CLE14p peptide for its receptor. Mostly expressed in roots, and, to a lower extent, in seedlings and leaves. Expressed in the primary root tip under Pi deficiency.

The protein resides in the secreted. It is found in the extracellular space. Its function is as follows. Extracellular signal peptide that regulates cell fate. Represses root apical meristem maintenance. Acts as an elicitor of the root meristem differentiation through the CLV2/CRN complex signaling pathway. Inhibits irreversibly root growth by reducing cell division rates in the root apical meristem. Regulates the transition of protophloem cells from proliferation to differentiation, thus impinging on postembryonic growth capacity of the root meristem; this signaling pathway requires CRN and CLV2. The sequence is that of CLAVATA3/ESR (CLE)-related protein 14 from Arabidopsis thaliana (Mouse-ear cress).